We begin with the raw amino-acid sequence, 268 residues long: Phosphate import ATP-binding protein PstB 2 (268 aa).

The ABC transporter domain occupies 19 to 263; that stretch reads YKVRNMAFFY…PKDKRTEDYI (245 aa). 51-58 serves as a coordination point for ATP; the sequence is GPSGCGKS.

The protein belongs to the ABC transporter superfamily. Phosphate importer (TC 3.A.1.7) family. In terms of assembly, the complex is composed of two ATP-binding proteins (PstB), two transmembrane proteins (PstC and PstA) and a solute-binding protein (PstS).

It localises to the cell inner membrane. It carries out the reaction phosphate(out) + ATP + H2O = ADP + 2 phosphate(in) + H(+). Functionally, part of the ABC transporter complex PstSACB involved in phosphate import. Responsible for energy coupling to the transport system. The sequence is that of Phosphate import ATP-binding protein PstB 2 from Gloeobacter violaceus (strain ATCC 29082 / PCC 7421).